A 510-amino-acid chain; its full sequence is O-acetyltransferase pyr7 (510 aa).

This sequence belongs to the fumigaclavine B O-acetyltransferase family.

The protein operates within secondary metabolite biosynthesis; terpenoid biosynthesis. Functionally, O-acetyltransferase; part of the gene cluster that mediates the biosynthesis of pyripyropene A, a specific human acyl-coenzyme A:cholesterol acyltransferase 2 inhibitor. The first step of the pathway is the synthesis of nicotinyl-CoA from nicotinic acid by the nicotinic acid-CoA ligase pyr1. Nicotinyl-CoA is then a substrate of polyketide synthase pyr2 to produce 4-hydroxy-6-(3-pyridinyl)-2H-pyran-2-one (HPPO) which is further prenylated by the polyprenyl transferase pyr6 to yield farnesyl-HPPO. The next steps consist of an epoxidation of farnesyl-HPPO to epoxyfarnesyl-HPPO by FAD-dependent monooxygenase pyr5 and a cyclization of the terpenoid portion by the terpene cyclase pyr4 to yield deacetyl-pyripyropene E. The 2 cytochrome P450 monooxygenases pyr3 and pyr9, and the 2 acetyltransferases pyr7 and pyr8 are involved in the conversion of deacetyl-pyripyropene E into pyripyropene A through several cycles of oxidation and acetylation steps. Pyr7 acetylates deacetyl-pyripyropene E to pyripyropene E which is oxidized to 11-deacetyl-pyripyropene O by pyr3, which is in turn acetylated into pyripyropene O by pyr8. Pyripyropene O is then oxidized to deacetyl-pyripyropene A by pyr9. Deacetyl-pyripyropene A is finally acetylated to pyripyropene A by pyr8. This Aspergillus fumigatus (strain ATCC MYA-4609 / CBS 101355 / FGSC A1100 / Af293) (Neosartorya fumigata) protein is O-acetyltransferase pyr7.